Consider the following 126-residue polypeptide: Probable glycine cleavage system H protein (126 aa).

In terms of domain architecture, Lipoyl-binding spans 24–106 (VVRVGITDFA…FGDGWLLEVE (83 aa)). K65 is modified (N6-lipoyllysine).

This sequence belongs to the GcvH family. As to quaternary structure, the glycine cleavage system is composed of four proteins: P, T, L and H. Requires (R)-lipoate as cofactor.

Its function is as follows. The glycine cleavage system catalyzes the degradation of glycine. The H protein shuttles the methylamine group of glycine from the P protein to the T protein. The protein is Probable glycine cleavage system H protein of Natronomonas pharaonis (strain ATCC 35678 / DSM 2160 / CIP 103997 / JCM 8858 / NBRC 14720 / NCIMB 2260 / Gabara) (Halobacterium pharaonis).